A 343-amino-acid chain; its full sequence is L-threonine 3-dehydrogenase (343 aa).

Cys40 lines the Zn(2+) pocket. Residues Thr42 and His45 each act as charge relay system in the active site. Zn(2+) contacts are provided by His65, Glu66, Cys95, Cys98, Cys101, and Cys109. Residues Ile177, Asp197, Arg202, 264–266 (LGI), and 288–289 (IY) each bind NAD(+).

It belongs to the zinc-containing alcohol dehydrogenase family. As to quaternary structure, homotetramer. It depends on Zn(2+) as a cofactor.

The protein localises to the cytoplasm. The catalysed reaction is L-threonine + NAD(+) = (2S)-2-amino-3-oxobutanoate + NADH + H(+). Its pathway is amino-acid degradation; L-threonine degradation via oxydo-reductase pathway; glycine from L-threonine: step 1/2. Functionally, catalyzes the NAD(+)-dependent oxidation of L-threonine to 2-amino-3-ketobutyrate. The chain is L-threonine 3-dehydrogenase from Aliivibrio fischeri (strain ATCC 700601 / ES114) (Vibrio fischeri).